We begin with the raw amino-acid sequence, 62 residues long: Photosystem II reaction center protein Z (62 aa).

A run of 2 helical transmembrane segments spans residues 8–28 and 41–61; these read LVLLLITLSTILVVGVPVVLA and YTGAGLWTGLVIVTSLVNSLV.

Belongs to the PsbZ family. PSII is composed of 1 copy each of membrane proteins PsbA, PsbB, PsbC, PsbD, PsbE, PsbF, PsbH, PsbI, PsbJ, PsbK, PsbL, PsbM, PsbT, PsbX, PsbY, PsbZ, Psb30/Ycf12, at least 3 peripheral proteins of the oxygen-evolving complex and a large number of cofactors. It forms dimeric complexes.

Its subcellular location is the plastid. The protein resides in the chloroplast thylakoid membrane. May control the interaction of photosystem II (PSII) cores with the light-harvesting antenna, regulates electron flow through the 2 photosystem reaction centers. PSII is a light-driven water plastoquinone oxidoreductase, using light energy to abstract electrons from H(2)O, generating a proton gradient subsequently used for ATP formation. In Porphyra purpurea (Red seaweed), this protein is Photosystem II reaction center protein Z.